A 138-amino-acid polypeptide reads, in one-letter code: UPF0355 protein SSP2326 (138 aa).

A disordered region spans residues 115–138 (NVAFETNQTKSNSHYSEETNGPKS). Residues 118-138 (FETNQTKSNSHYSEETNGPKS) show a composition bias toward polar residues.

It belongs to the UPF0355 family.

This is UPF0355 protein SSP2326 from Staphylococcus saprophyticus subsp. saprophyticus (strain ATCC 15305 / DSM 20229 / NCIMB 8711 / NCTC 7292 / S-41).